A 207-amino-acid chain; its full sequence is Protein GrpE (207 aa).

Positions 1 to 33 are disordered; sequence MTDPNGPKDIPEQSAEAAEPVVSKPYIMPDDPE.

This sequence belongs to the GrpE family. As to quaternary structure, homodimer.

It localises to the cytoplasm. Its function is as follows. Participates actively in the response to hyperosmotic and heat shock by preventing the aggregation of stress-denatured proteins, in association with DnaK and GrpE. It is the nucleotide exchange factor for DnaK and may function as a thermosensor. Unfolded proteins bind initially to DnaJ; upon interaction with the DnaJ-bound protein, DnaK hydrolyzes its bound ATP, resulting in the formation of a stable complex. GrpE releases ADP from DnaK; ATP binding to DnaK triggers the release of the substrate protein, thus completing the reaction cycle. Several rounds of ATP-dependent interactions between DnaJ, DnaK and GrpE are required for fully efficient folding. This is Protein GrpE from Rhodopseudomonas palustris (strain BisA53).